Here is a 396-residue protein sequence, read N- to C-terminus: Unsaturated chondroitin disaccharide hydrolase (396 aa).

Catalysis depends on aspartate 113, which acts as the Nucleophile. Substrate is bound by residues aspartate 113, aspartate 173, glycine 231, threonine 233, arginine 245, tryptophan 249, serine 363, and serine 366. The Proton donor role is filled by aspartate 173.

Belongs to the glycosyl hydrolase 88 family. Monomer.

It catalyses the reaction beta-D-4-deoxy-Delta(4)-GlcpA-(1-&gt;3)-beta-D-GalpNAc6S + H2O = N-acetyl-beta-D-galactosamine 6-sulfate + 5-dehydro-4-deoxy-D-glucuronate. Functionally, catalyzes the hydrolysis of unsaturated hyaluronate and chondroitin disaccharides. Also degrades unsaturated heparin disaccharides. Releases 4-deoxy-4,5-didehydro D-glucuronic acid or 4-deoxy-4,5-didehydro L-iduronic acid from chondroitin disaccharides, hyaluronan disaccharides and heparin disaccharides and cleaves both glycosidic (1-&gt;3) and (1-&gt;4) bonds. Prefers sulfated glycosaminoglycans compared to unsulfated glycosaminoglycans. Probably required for mammalian cells invasion through the degradation of extracellular sulfated glycosaminoglycans such as chondroitin and hyaluronan. The sequence is that of Unsaturated chondroitin disaccharide hydrolase (ugl) from Streptococcus pneumoniae (strain ATCC BAA-255 / R6).